We begin with the raw amino-acid sequence, 106 residues long: YcgL domain-containing protein HCH_02617 (106 aa).

A YcgL domain is found at 6–90 (RLISIFRSSK…VQDDYMMDVV (85 aa)).

This chain is YcgL domain-containing protein HCH_02617, found in Hahella chejuensis (strain KCTC 2396).